The sequence spans 208 residues: Superoxide dismutase [Mn] (208 aa).

Mn(2+) is bound by residues histidine 27, histidine 81, aspartate 168, and histidine 172.

It belongs to the iron/manganese superoxide dismutase family. Homodimer. Requires Mn(2+) as cofactor.

The enzyme catalyses 2 superoxide + 2 H(+) = H2O2 + O2. Destroys superoxide anion radicals which are normally produced within the cells and which are toxic to biological systems. The protein is Superoxide dismutase [Mn] (sodA) of Buchnera aphidicola subsp. Baizongia pistaciae (strain Bp).